The chain runs to 208 residues: Ribosomal RNA large subunit methyltransferase E (208 aa).

S-adenosyl-L-methionine contacts are provided by G63, W65, D83, D99, and D124. Catalysis depends on K164, which acts as the Proton acceptor.

It belongs to the class I-like SAM-binding methyltransferase superfamily. RNA methyltransferase RlmE family.

The protein resides in the cytoplasm. It catalyses the reaction uridine(2552) in 23S rRNA + S-adenosyl-L-methionine = 2'-O-methyluridine(2552) in 23S rRNA + S-adenosyl-L-homocysteine + H(+). Functionally, specifically methylates the uridine in position 2552 of 23S rRNA at the 2'-O position of the ribose in the fully assembled 50S ribosomal subunit. The polypeptide is Ribosomal RNA large subunit methyltransferase E (Salmonella typhi).